The primary structure comprises 213 residues: Endonuclease III (213 aa).

One can recognise a HhH domain in the interval Leu-101–Trp-120. [4Fe-4S] cluster contacts are provided by Cys-180, Cys-187, Cys-190, and Cys-196.

This sequence belongs to the Nth/MutY family. [4Fe-4S] cluster serves as cofactor.

It carries out the reaction 2'-deoxyribonucleotide-(2'-deoxyribose 5'-phosphate)-2'-deoxyribonucleotide-DNA = a 3'-end 2'-deoxyribonucleotide-(2,3-dehydro-2,3-deoxyribose 5'-phosphate)-DNA + a 5'-end 5'-phospho-2'-deoxyribonucleoside-DNA + H(+). DNA repair enzyme that has both DNA N-glycosylase activity and AP-lyase activity. The DNA N-glycosylase activity releases various damaged pyrimidines from DNA by cleaving the N-glycosidic bond, leaving an AP (apurinic/apyrimidinic) site. The AP-lyase activity cleaves the phosphodiester bond 3' to the AP site by a beta-elimination, leaving a 3'-terminal unsaturated sugar and a product with a terminal 5'-phosphate. The chain is Endonuclease III from Thermotoga maritima (strain ATCC 43589 / DSM 3109 / JCM 10099 / NBRC 100826 / MSB8).